The sequence spans 105 residues: Integration host factor subunit beta (105 aa).

This sequence belongs to the bacterial histone-like protein family. Heterodimer of an alpha and a beta chain.

In terms of biological role, this protein is one of the two subunits of integration host factor, a specific DNA-binding protein that functions in genetic recombination as well as in transcriptional and translational control. The chain is Integration host factor subunit beta from Nitrosomonas eutropha (strain DSM 101675 / C91 / Nm57).